The sequence spans 473 residues: 3-isopropylmalate dehydratase large subunit (473 aa).

Residues cysteine 354, cysteine 414, and cysteine 417 each coordinate [4Fe-4S] cluster.

Belongs to the aconitase/IPM isomerase family. LeuC type 1 subfamily. Heterodimer of LeuC and LeuD. The cofactor is [4Fe-4S] cluster.

It catalyses the reaction (2R,3S)-3-isopropylmalate = (2S)-2-isopropylmalate. It participates in amino-acid biosynthesis; L-leucine biosynthesis; L-leucine from 3-methyl-2-oxobutanoate: step 2/4. Catalyzes the isomerization between 2-isopropylmalate and 3-isopropylmalate, via the formation of 2-isopropylmaleate. The chain is 3-isopropylmalate dehydratase large subunit from Mycobacterium bovis (strain ATCC BAA-935 / AF2122/97).